We begin with the raw amino-acid sequence, 266 residues long: Diphthine synthase (266 aa).

S-adenosyl-L-methionine is bound by residues leucine 9, aspartate 84, valine 87, 112–113 (SI), leucine 169, alanine 210, and histidine 235.

The protein belongs to the diphthine synthase family. Homodimer.

It catalyses the reaction 2-[(3S)-amino-3-carboxypropyl]-L-histidyl-[translation elongation factor 2] + 3 S-adenosyl-L-methionine = diphthine-[translation elongation factor 2] + 3 S-adenosyl-L-homocysteine + 3 H(+). Its pathway is protein modification; peptidyl-diphthamide biosynthesis. Functionally, S-adenosyl-L-methionine-dependent methyltransferase that catalyzes the trimethylation of the amino group of the modified target histidine residue in translation elongation factor 2 (EF-2), to form an intermediate called diphthine. The three successive methylation reactions represent the second step of diphthamide biosynthesis. This Methanosarcina mazei (strain ATCC BAA-159 / DSM 3647 / Goe1 / Go1 / JCM 11833 / OCM 88) (Methanosarcina frisia) protein is Diphthine synthase.